Consider the following 137-residue polypeptide: uncharacterized protein (137 aa).

Residues 116–137 (ARPPRGSGGTRTARNGARTASE) form a disordered region. The span at 125 to 137 (TRTARNGARTASE) shows a compositional bias: polar residues.

This is an uncharacterized protein from Mycobacterium bovis (strain ATCC BAA-935 / AF2122/97).